Consider the following 371-residue polypeptide: Outer membrane protein P2 (371 aa).

The signal sequence occupies residues 1 to 20; that stretch reads MKKTLAALIVGAFAASAANA.

It belongs to the Gram-negative porin family. As to quaternary structure, homotrimer.

It is found in the cell outer membrane. Forms pores that allow passive diffusion of small molecules across the outer membrane. This Haemophilus influenzae protein is Outer membrane protein P2 (ompP2).